The chain runs to 567 residues: Dihydrolipoyllysine-residue acetyltransferase component of pyruvate dehydrogenase complex (567 aa).

2 Lipoyl-binding domains span residues Ser-2–Glu-75 and Ile-108–Glu-181. Lys-41 and Lys-147 each carry N6-lipoyllysine. Residues Ser-192–Ser-238 show a composition bias toward low complexity. Residues Ser-192 to Gln-249 are disordered. Positions Asn-239 to Gln-249 are enriched in polar residues. The region spanning His-258 to Val-295 is the Peripheral subunit-binding (PSBD) domain. Residues Cys-484, His-540, and Asp-544 contribute to the active site.

The protein belongs to the 2-oxoacid dehydrogenase family. In terms of assembly, forms a 24-polypeptide structural core with octahedral symmetry. Requires (R)-lipoate as cofactor.

It carries out the reaction N(6)-[(R)-dihydrolipoyl]-L-lysyl-[protein] + acetyl-CoA = N(6)-[(R)-S(8)-acetyldihydrolipoyl]-L-lysyl-[protein] + CoA. Functionally, the pyruvate dehydrogenase complex catalyzes the overall conversion of pyruvate to acetyl-CoA and CO(2). It contains multiple copies of three enzymatic components: pyruvate dehydrogenase (E1), dihydrolipoamide acetyltransferase (E2) and lipoamide dehydrogenase (E3). In Haemophilus influenzae (strain ATCC 51907 / DSM 11121 / KW20 / Rd), this protein is Dihydrolipoyllysine-residue acetyltransferase component of pyruvate dehydrogenase complex (aceF).